Consider the following 188-residue polypeptide: Probable nicotinate-nucleotide adenylyltransferase (188 aa).

Belongs to the NadD family.

It carries out the reaction nicotinate beta-D-ribonucleotide + ATP + H(+) = deamido-NAD(+) + diphosphate. The protein operates within cofactor biosynthesis; NAD(+) biosynthesis; deamido-NAD(+) from nicotinate D-ribonucleotide: step 1/1. Functionally, catalyzes the reversible adenylation of nicotinate mononucleotide (NaMN) to nicotinic acid adenine dinucleotide (NaAD). This is Probable nicotinate-nucleotide adenylyltransferase from Solibacter usitatus (strain Ellin6076).